The sequence spans 260 residues: FAS1 domain-containing protein SELMODRAFT_448915 (260 aa).

Residues 1–35 (MRRTGRSYKPLLSQLKDHHIPVHPSSRAERAMESR) lie on the Cytoplasmic side of the membrane. Residues 36 to 58 (TLLVLLFVGVVTIVSSGLERAAA) form a helical membrane-spanning segment. Residues 59-198 (QDDTDDGILP…IACHGIDRVL (140 aa)) form the FAS1 domain. Over 59–260 (QDDTDDGILP…SSASRYPVSE (202 aa)) the chain is Extracellular. N-linked (GlcNAc...) asparagine glycans are attached at residues asparagine 118, asparagine 169, asparagine 176, asparagine 201, asparagine 236, and asparagine 247. Residues 210-260 (PEASPPFGAEQASPAPEALPPGTRSPNNTANPSNRKSNSTRSSASRYPVSE) form a disordered region. A compositionally biased stretch (polar residues) spans 233-254 (RSPNNTANPSNRKSNSTRSSAS).

The protein localises to the membrane. This Selaginella moellendorffii (Spikemoss) protein is FAS1 domain-containing protein SELMODRAFT_448915.